A 328-amino-acid chain; its full sequence is Carbonic anhydrase-related protein 11 (328 aa).

An N-terminal signal peptide occupies residues 1-23 (MGAAPRLSAPRVLVLWAALGAAA). Residues 33–303 (DWWSYKDNLQ…LAHRALRGNR (271 aa)) enclose the Alpha-carbonic anhydrase domain. N-linked (GlcNAc...) asparagine glycosylation occurs at Asn118. The segment at 300-328 (RGNRDPRHPERRCRGPNYRLHVDDVPHGL) is disordered. Residues 319 to 328 (LHVDDVPHGL) are compositionally biased toward basic and acidic residues.

Belongs to the alpha-carbonic anhydrase family.

The protein resides in the secreted. Does not have a catalytic activity. This Ovis aries (Sheep) protein is Carbonic anhydrase-related protein 11 (CA11).